We begin with the raw amino-acid sequence, 290 residues long: Undecaprenyl-diphosphatase (290 aa).

The next 8 helical transmembrane spans lie at 1–21 (MALWIAALLGVIQGIFMFLPV), 49–69 (MILFALVVHVGTLVSIAVVFW), 101–121 (LFWLGMFSVLCTGVLGLTLKA), 126–146 (VFASPLMIAGTLTLTGILLWW), 160–180 (INLKVAGVIGLAQGFALMPGL), 203–223 (YSFFLAIPTICAATLLQAIEV), 232–252 (VGFSALAVGFVVAAIVGIISL), and 266–286 (VFSFYVWALALGIATGLIDLA).

It belongs to the UppP family.

Its subcellular location is the cell inner membrane. It carries out the reaction di-trans,octa-cis-undecaprenyl diphosphate + H2O = di-trans,octa-cis-undecaprenyl phosphate + phosphate + H(+). Its function is as follows. Catalyzes the dephosphorylation of undecaprenyl diphosphate (UPP). Confers resistance to bacitracin. This Alkalilimnicola ehrlichii (strain ATCC BAA-1101 / DSM 17681 / MLHE-1) protein is Undecaprenyl-diphosphatase.